A 538-amino-acid polypeptide reads, in one-letter code: uncharacterized protein (538 aa).

Residues 1-17 form the signal peptide; sequence MNLQILLLLLLFCHVAA. The N-linked (GlcNAc...) asparagine glycan is linked to asparagine 115.

This is an uncharacterized protein from Caenorhabditis elegans.